A 550-amino-acid polypeptide reads, in one-letter code: NAD(P)H-quinone oxidoreductase chain 4 3 (550 aa).

The next 14 helical transmembrane spans lie at 5 to 25 (FPWL…IPLL), 36 to 56 (YALI…WQHF), 86 to 106 (ISAP…FSAW), 114 to 134 (LFYA…VAKD), 135 to 155 (LFLF…LVCI), 168 to 188 (FLLY…ALSL), 212 to 232 (MWLY…FPLH), 243 to 263 (SSPV…YGLM), 277 to 297 (FAPL…FSSF), 311 to 331 (VSHM…GING), 332 to 352 (AMLQ…LAGV), 375 to 395 (VFAM…MSGF), 418 to 438 (ITVF…LSML), and 489 to 509 (IFIA…PKLL).

The protein belongs to the complex I subunit 4 family.

The protein resides in the cellular thylakoid membrane. The enzyme catalyses a plastoquinone + NADH + (n+1) H(+)(in) = a plastoquinol + NAD(+) + n H(+)(out). It carries out the reaction a plastoquinone + NADPH + (n+1) H(+)(in) = a plastoquinol + NADP(+) + n H(+)(out). NDH-1 shuttles electrons from NAD(P)H, via FMN and iron-sulfur (Fe-S) centers, to quinones in the respiratory chain. The immediate electron acceptor for the enzyme in this species is believed to be plastoquinone. Couples the redox reaction to proton translocation (for every two electrons transferred, four hydrogen ions are translocated across the cytoplasmic membrane), and thus conserves the redox energy in a proton gradient. This Picosynechococcus sp. (strain ATCC 27264 / PCC 7002 / PR-6) (Agmenellum quadruplicatum) protein is NAD(P)H-quinone oxidoreductase chain 4 3.